We begin with the raw amino-acid sequence, 383 residues long: Meiotically up-regulated gene 93 protein (383 aa).

Residues 75-108 (KKVIWRRGLAYLRLGHPHLANRDWEHSLELDPNN) form a TPR repeat.

Its subcellular location is the cytoplasm. The protein resides in the nucleus. Functionally, has a role in meiosis. The sequence is that of Meiotically up-regulated gene 93 protein (mug93) from Schizosaccharomyces pombe (strain 972 / ATCC 24843) (Fission yeast).